The primary structure comprises 383 residues: D-alanine--D-alanine ligase (383 aa).

The ATP-grasp domain occupies 164-373 (KLAFQAAGLE…YSALIDELIT (210 aa)). 196–251 (VAELGFPVFVKPARAGSSFGITRVDEPSQLDAAIATAREHDLKLVVEAGIDGREIE) is an ATP binding site. Asp327, Glu340, and Asn342 together coordinate Mg(2+).

The protein belongs to the D-alanine--D-alanine ligase family. Mg(2+) is required as a cofactor. The cofactor is Mn(2+).

The protein localises to the cytoplasm. The catalysed reaction is 2 D-alanine + ATP = D-alanyl-D-alanine + ADP + phosphate + H(+). The protein operates within cell wall biogenesis; peptidoglycan biosynthesis. Cell wall formation. The polypeptide is D-alanine--D-alanine ligase (Kocuria rhizophila (strain ATCC 9341 / DSM 348 / NBRC 103217 / DC2201)).